Here is a 123-residue protein sequence, read N- to C-terminus: Prismalin-14 (123 aa).

Residues 1-16 form the signal peptide; it reads MRSLLVLLALAACASA.

In terms of tissue distribution, prismatic layer of shell (at protein level). Expressed primarily in the mantle with highest level in the mantle edge and lower level in the mantle pallium.

It is found in the secreted. May be involved in calcification of the prismatic layer of the shell. This Margaritifera margaritifera (Freshwater pearl mussel) protein is Prismalin-14.